Here is a 147-residue protein sequence, read N- to C-terminus: Large ribosomal subunit protein bL9 (147 aa).

It belongs to the bacterial ribosomal protein bL9 family.

Functionally, binds to the 23S rRNA. This chain is Large ribosomal subunit protein bL9, found in Bdellovibrio bacteriovorus (strain ATCC 15356 / DSM 50701 / NCIMB 9529 / HD100).